Consider the following 336-residue polypeptide: Holliday junction branch migration complex subunit RuvB (336 aa).

The interval 4 to 184 is large ATPase domain (RuvB-L); that stretch reads ADRLISAGTT…FGIVQRLEFY (181 aa). Residues I23, R24, G65, K68, T69, T70, 131–133, R174, Y184, and R221 each bind ATP; that span reads EDY. T69 serves as a coordination point for Mg(2+). Residues 185–255 are small ATPAse domain (RuvB-S); it reads QVPDLQYIVS…IAAQALDMLN (71 aa). A head domain (RuvB-H) region spans residues 258–336; sequence AEGFDYMDRK…HFGITPPEMP (79 aa). 3 residues coordinate DNA: R294, R313, and R318.

It belongs to the RuvB family. As to quaternary structure, homohexamer. Forms an RuvA(8)-RuvB(12)-Holliday junction (HJ) complex. HJ DNA is sandwiched between 2 RuvA tetramers; dsDNA enters through RuvA and exits via RuvB. An RuvB hexamer assembles on each DNA strand where it exits the tetramer. Each RuvB hexamer is contacted by two RuvA subunits (via domain III) on 2 adjacent RuvB subunits; this complex drives branch migration. In the full resolvosome a probable DNA-RuvA(4)-RuvB(12)-RuvC(2) complex forms which resolves the HJ.

It localises to the cytoplasm. The enzyme catalyses ATP + H2O = ADP + phosphate + H(+). Functionally, the RuvA-RuvB-RuvC complex processes Holliday junction (HJ) DNA during genetic recombination and DNA repair, while the RuvA-RuvB complex plays an important role in the rescue of blocked DNA replication forks via replication fork reversal (RFR). RuvA specifically binds to HJ cruciform DNA, conferring on it an open structure. The RuvB hexamer acts as an ATP-dependent pump, pulling dsDNA into and through the RuvAB complex. RuvB forms 2 homohexamers on either side of HJ DNA bound by 1 or 2 RuvA tetramers; 4 subunits per hexamer contact DNA at a time. Coordinated motions by a converter formed by DNA-disengaged RuvB subunits stimulates ATP hydrolysis and nucleotide exchange. Immobilization of the converter enables RuvB to convert the ATP-contained energy into a lever motion, pulling 2 nucleotides of DNA out of the RuvA tetramer per ATP hydrolyzed, thus driving DNA branch migration. The RuvB motors rotate together with the DNA substrate, which together with the progressing nucleotide cycle form the mechanistic basis for DNA recombination by continuous HJ branch migration. Branch migration allows RuvC to scan DNA until it finds its consensus sequence, where it cleaves and resolves cruciform DNA. This chain is Holliday junction branch migration complex subunit RuvB, found in Shigella boydii serotype 18 (strain CDC 3083-94 / BS512).